Consider the following 465-residue polypeptide: VGFKAGVKDYKLTYYTPDYETKDTDILAAFRVTPQPGVPPEEAGAAVAAESSTGTWTTVWTDGLTSLDRYKGRCYHIEPVAGEENQYIAYVAYPLDLFEEGSVTNMFTSIVGNVFGFKALRALRLEDLRIPPAYSKTFQGPPHGIQVERDKLNKYGRPLLGCTIKPKLGLSAKNYGRAVYECLRGGLDFTKDDENVNSQPFMRWRDRFVFCAEAIYKAQAETGEIKGHYLNATAGTCEEMIKRAVFARELGVPIVMHDYLTGGFTANTSLAHYCRDNGLLLHIHRAMHAVIDRQKNHGMHFRVLAKALRLSGGDHVHAGTVVGKLEGEREITLGFVDLLRDDYVEKDRSRGIYFTQDWVSLPGVLPVASGGIHVWHMPALTEIFGDDSVLQFGGGTLGHPWGNAPGAVANRVALEACVQARNEGRDLAREGNEIIREASKWSPELAAACEVWKEIKFEFEAMDTL.

The residue at position 4 (K4) is an N6,N6,N6-trimethyllysine. Residues N113 and T163 each coordinate substrate. K165 serves as the catalytic Proton acceptor. K167 is a binding site for substrate. 3 residues coordinate Mg(2+): K191, D193, and E194. K191 is modified (N6-carboxylysine). H284 (proton acceptor) is an active-site residue. Residues R285, H317, and S369 each coordinate substrate.

This sequence belongs to the RuBisCO large chain family. Type I subfamily. Heterohexadecamer of 8 large chains and 8 small chains; disulfide-linked. The disulfide link is formed within the large subunit homodimers. Requires Mg(2+) as cofactor. Post-translationally, the disulfide bond which can form in the large chain dimeric partners within the hexadecamer appears to be associated with oxidative stress and protein turnover.

It localises to the plastid. The protein resides in the chloroplast. The enzyme catalyses 2 (2R)-3-phosphoglycerate + 2 H(+) = D-ribulose 1,5-bisphosphate + CO2 + H2O. The catalysed reaction is D-ribulose 1,5-bisphosphate + O2 = 2-phosphoglycolate + (2R)-3-phosphoglycerate + 2 H(+). Functionally, ruBisCO catalyzes two reactions: the carboxylation of D-ribulose 1,5-bisphosphate, the primary event in carbon dioxide fixation, as well as the oxidative fragmentation of the pentose substrate in the photorespiration process. Both reactions occur simultaneously and in competition at the same active site. The chain is Ribulose bisphosphate carboxylase large chain from Manilkara zapota (Sapodilla plum).